Reading from the N-terminus, the 258-residue chain is Indole-3-glycerol phosphate synthase (258 aa).

The protein belongs to the TrpC family.

It carries out the reaction 1-(2-carboxyphenylamino)-1-deoxy-D-ribulose 5-phosphate + H(+) = (1S,2R)-1-C-(indol-3-yl)glycerol 3-phosphate + CO2 + H2O. It functions in the pathway amino-acid biosynthesis; L-tryptophan biosynthesis; L-tryptophan from chorismate: step 4/5. In Legionella pneumophila (strain Lens), this protein is Indole-3-glycerol phosphate synthase.